A 276-amino-acid chain; its full sequence is NAD kinase (276 aa).

Residue D61 is the Proton acceptor of the active site. NAD(+) is bound by residues 61 to 62 (DG), R66, 135 to 136 (NE), R146, H163, D165, and A200.

It belongs to the NAD kinase family. A divalent metal cation serves as cofactor.

Its subcellular location is the cytoplasm. It catalyses the reaction NAD(+) + ATP = ADP + NADP(+) + H(+). Its function is as follows. Involved in the regulation of the intracellular balance of NAD and NADP, and is a key enzyme in the biosynthesis of NADP. Catalyzes specifically the phosphorylation on 2'-hydroxyl of the adenosine moiety of NAD to yield NADP. The chain is NAD kinase from Chloroflexus aggregans (strain MD-66 / DSM 9485).